A 637-amino-acid chain; its full sequence is Chaperone protein DnaK (637 aa).

At Thr198 the chain carries Phosphothreonine; by autocatalysis. The disordered stretch occupies residues 597-637; sequence MYQQAAQESGQTEGAAQDPKGAAQDDDVVDADFEEVKDHKK. Residues 600-610 show a composition bias toward polar residues; sequence QAAQESGQTEG. The span at 620-629 shows a compositional bias: acidic residues; it reads QDDDVVDADF.

It belongs to the heat shock protein 70 family.

Acts as a chaperone. In Desulforapulum autotrophicum (strain ATCC 43914 / DSM 3382 / VKM B-1955 / HRM2) (Desulfobacterium autotrophicum), this protein is Chaperone protein DnaK.